We begin with the raw amino-acid sequence, 1043 residues long: Liprin-alpha-4 (1043 aa).

Coiled coils occupy residues 24 to 332 and 426 to 470; these read EKVR…GRGG and ILDA…RVTS. A disordered region spans residues 498–617; the sequence is SASPPLSGRS…AKRKGIKSSI (120 aa). Serine 500 carries the phosphoserine modification. Residues 505–516 show a composition bias toward polar residues; that stretch reads GRSTPKLTSRSA. A Phosphoserine modification is found at serine 541. Basic and acidic residues predominate over residues 544–555; that stretch reads SREENREDKATI. The segment covering 590–602 has biased composition (low complexity); that stretch reads QDSNPSSSNSSQD. 3 SAM domains span residues 688-754, 803-867, and 891-960; these read WDGP…MVSL, NHEW…LKRL, and WTND…LLAL. Positions 864-890 form a coiled coil; that stretch reads LKRLNYDRKELEKRREESQHEIKDVLV.

This sequence belongs to the liprin family. Liprin-alpha subfamily. Forms homodimers and heterodimers with liprins-alpha and liprins-beta. Interacts with the second PTPase domain of PTPRD, PTPRF and PTPRS. Interacts with RIMS1 and RIMS2. Interacts with GIT1 and GIT2. Interacts with GRIP1. Interacts with KIF1A.

It is found in the cytoplasm. The protein localises to the cell surface. In terms of biological role, may regulate the disassembly of focal adhesions. May localize receptor-like tyrosine phosphatases type 2A at specific sites on the plasma membrane, possibly regulating their interaction with the extracellular environment and their association with substrates. In Rattus norvegicus (Rat), this protein is Liprin-alpha-4 (Ppfia4).